The primary structure comprises 376 residues: WW domain-binding protein 4 (376 aa).

Residues 11–42 (KFCDYCKCWIADNRPSVEFHERGKNHKENVAK) form a Matrin-type zinc finger. The span at 94-107 (ITPVTSTIPPTSTS) shows a compositional bias: low complexity. 3 disordered regions span residues 94–128 (ITPV…KGRW), 189–335 (SRWE…EPKV), and 356–376 (FKKR…GDDQ). WW domains are found at residues 122-155 (DPSK…KPEG) and 163-196 (TAVK…KPDD). Basic and acidic residues predominate over residues 189–198 (SRWEKPDDFI). Positions 203–215 (DLPSSKVNENSLG) are enriched in polar residues. Basic and acidic residues-rich tracts occupy residues 218 to 229 (DESKSSDSHSDS) and 243 to 257 (ETEK…KNKN). Phosphoserine is present on residues Ser220, Ser227, and Ser229. Position 262 is a phosphoserine (Ser262). The segment covering 298 to 309 (QEIKQEVESHEE) has biased composition (basic and acidic residues). The span at 316-326 (STENEYVSTSE) shows a compositional bias: polar residues. The interaction with SNRNP200 stretch occupies residues 357–375 (KKRRTENGKSRNLRQRGDD). Basic and acidic residues predominate over residues 361–376 (TENGKSRNLRQRGDDQ).

In terms of assembly, component of the spliceosome B complex. Associated with U2 snRNPs. Binds splicing factors SNRPB, SNRPC and SF1. Interacts via the WW domains with the Pro-rich domains of KHDRBS1/SAM68. Interacts via the WW domains with the Pro-rich domains of WBP11. Interacts with SNRNP200.

It is found in the nucleus. Its subcellular location is the nucleus speckle. Functionally, involved in pre-mRNA splicing as a component of the spliceosome. May play a role in cross-intron bridging of U1 and U2 snRNPs in the mammalian A complex. This chain is WW domain-binding protein 4 (WBP4), found in Homo sapiens (Human).